The following is a 413-amino-acid chain: Arginine biosynthesis bifunctional protein ArgJ (413 aa).

Residues T158, K184, T195, E285, N408, and S413 each contribute to the substrate site. The Nucleophile role is filled by T195.

It belongs to the ArgJ family. Heterotetramer of two alpha and two beta chains.

Its subcellular location is the cytoplasm. It catalyses the reaction N(2)-acetyl-L-ornithine + L-glutamate = N-acetyl-L-glutamate + L-ornithine. The catalysed reaction is L-glutamate + acetyl-CoA = N-acetyl-L-glutamate + CoA + H(+). It participates in amino-acid biosynthesis; L-arginine biosynthesis; L-ornithine and N-acetyl-L-glutamate from L-glutamate and N(2)-acetyl-L-ornithine (cyclic): step 1/1. It functions in the pathway amino-acid biosynthesis; L-arginine biosynthesis; N(2)-acetyl-L-ornithine from L-glutamate: step 1/4. Catalyzes two activities which are involved in the cyclic version of arginine biosynthesis: the synthesis of N-acetylglutamate from glutamate and acetyl-CoA as the acetyl donor, and of ornithine by transacetylation between N(2)-acetylornithine and glutamate. This is Arginine biosynthesis bifunctional protein ArgJ from Brucella suis biovar 1 (strain 1330).